The primary structure comprises 663 residues: UvrABC system protein B (663 aa).

Over residues 1 to 10 (MIDKRDDKPF) the composition is skewed to basic and acidic residues. A disordered region spans residues 1–23 (MIDKRDDKPFKLKSKYKPSGDQP). The 388-residue stretch at 31–418 (DNIEGGEKAQ…TNTIIEQIIR (388 aa)) folds into the Helicase ATP-binding domain. 44–51 (GATGTGKT) is a binding site for ATP. The short motif at 97–120 (YYDYYQPEAYVPSSDTYIEKDSSV) is the Beta-hairpin element. Residues 435-601 (QMDDLLGEIN…TIKKDIRGLI (167 aa)) form the Helicase C-terminal domain. Positions 627–662 (KEAINALQKQMQEAAELLDFELAAQMRDLILELKLM) constitute a UVR domain.

This sequence belongs to the UvrB family. As to quaternary structure, forms a heterotetramer with UvrA during the search for lesions. Interacts with UvrC in an incision complex.

The protein localises to the cytoplasm. The UvrABC repair system catalyzes the recognition and processing of DNA lesions. A damage recognition complex composed of 2 UvrA and 2 UvrB subunits scans DNA for abnormalities. Upon binding of the UvrA(2)B(2) complex to a putative damaged site, the DNA wraps around one UvrB monomer. DNA wrap is dependent on ATP binding by UvrB and probably causes local melting of the DNA helix, facilitating insertion of UvrB beta-hairpin between the DNA strands. Then UvrB probes one DNA strand for the presence of a lesion. If a lesion is found the UvrA subunits dissociate and the UvrB-DNA preincision complex is formed. This complex is subsequently bound by UvrC and the second UvrB is released. If no lesion is found, the DNA wraps around the other UvrB subunit that will check the other stand for damage. The polypeptide is UvrABC system protein B (Streptococcus pyogenes serotype M3 (strain ATCC BAA-595 / MGAS315)).